Here is a 449-residue protein sequence, read N- to C-terminus: Exodeoxyribonuclease 7 large subunit (449 aa).

Belongs to the XseA family. Heterooligomer composed of large and small subunits.

The protein resides in the cytoplasm. The enzyme catalyses Exonucleolytic cleavage in either 5'- to 3'- or 3'- to 5'-direction to yield nucleoside 5'-phosphates.. In terms of biological role, bidirectionally degrades single-stranded DNA into large acid-insoluble oligonucleotides, which are then degraded further into small acid-soluble oligonucleotides. This is Exodeoxyribonuclease 7 large subunit from Salmonella agona (strain SL483).